Consider the following 66-residue polypeptide: Large ribosomal subunit protein uL29 (66 aa).

This sequence belongs to the universal ribosomal protein uL29 family.

The polypeptide is Large ribosomal subunit protein uL29 (Geobacillus kaustophilus (strain HTA426)).